A 152-amino-acid polypeptide reads, in one-letter code: UPF0225 protein YchJ (152 aa).

The protein belongs to the UPF0225 family.

This chain is UPF0225 protein YchJ, found in Escherichia coli O81 (strain ED1a).